Reading from the N-terminus, the 412-residue chain is Multidrug resistance protein MdtG (412 aa).

11 helical membrane-spanning segments follow: residues 19-39 (LGCF…PLYV), 56-76 (LVFS…GGLA), 90-110 (LGMS…QFLL), 113-133 (ALLG…ATQI), 144-164 (TLST…GFLA), 171-191 (TVFF…LFLI), 222-242 (LFVT…ILTL), 254-274 (IAFI…MSAP), 288-308 (ILIV…FVQT), 317-337 (FLLG…LVYN), and 376-396 (AVFL…TLSL).

Belongs to the major facilitator superfamily. DHA1 family. MdtG (TC 2.A.1.2.20) subfamily.

It localises to the cell inner membrane. This chain is Multidrug resistance protein MdtG, found in Klebsiella pneumoniae (strain 342).